The following is a 497-amino-acid chain: Probable malate:quinone oxidoreductase (497 aa).

Belongs to the MQO family. Requires FAD as cofactor.

It catalyses the reaction (S)-malate + a quinone = a quinol + oxaloacetate. The protein operates within carbohydrate metabolism; tricarboxylic acid cycle; oxaloacetate from (S)-malate (quinone route): step 1/1. In Flavobacterium johnsoniae (strain ATCC 17061 / DSM 2064 / JCM 8514 / BCRC 14874 / CCUG 350202 / NBRC 14942 / NCIMB 11054 / UW101) (Cytophaga johnsonae), this protein is Probable malate:quinone oxidoreductase.